A 255-amino-acid polypeptide reads, in one-letter code: MAVGKNKRLSKGKKGLKKKVVDPFTRKEWYDIKAPSTFENRNVGKTLVNKSTGLKSASDALKGRVVEVCLADLQGSEDHSFRKVKLRVDDVQGKNLLTNFHGMDFTADKLRSMVRKWQTLIEANVTVKTSDEYIIRVFAIAFTRKQSNQVKRTAYAQSSHIRAIRKVISDILTREVSNSTLAQFTSKLIPEVINKEIENATKDIFPLQNVHIRKVKLLKQPKFDLGSLMALHGEGSAEEKGKKVSGFKDEVLETV.

Ala-2 is subject to N-acetylalanine; partial.

Belongs to the eukaryotic ribosomal protein eS1 family. Component of the small ribosomal subunit. Mature ribosomes consist of a small (40S) and a large (60S) subunit. The 40S subunit contains about 33 different proteins and 1 molecule of RNA (18S). The 60S subunit contains about 49 different proteins and 3 molecules of RNA (25S, 5.8S and 5S).

It is found in the cytoplasm. The chain is Small ribosomal subunit protein eS1 from Candida glabrata (strain ATCC 2001 / BCRC 20586 / JCM 3761 / NBRC 0622 / NRRL Y-65 / CBS 138) (Yeast).